Reading from the N-terminus, the 185-residue chain is Peptidyl-tRNA hydrolase (185 aa).

F14 is a binding site for tRNA. The active-site Proton acceptor is the H19. Y64, N66, and N112 together coordinate tRNA.

The protein belongs to the PTH family. In terms of assembly, monomer.

It is found in the cytoplasm. The enzyme catalyses an N-acyl-L-alpha-aminoacyl-tRNA + H2O = an N-acyl-L-amino acid + a tRNA + H(+). Hydrolyzes ribosome-free peptidyl-tRNAs (with 1 or more amino acids incorporated), which drop off the ribosome during protein synthesis, or as a result of ribosome stalling. Functionally, catalyzes the release of premature peptidyl moieties from peptidyl-tRNA molecules trapped in stalled 50S ribosomal subunits, and thus maintains levels of free tRNAs and 50S ribosomes. This chain is Peptidyl-tRNA hydrolase, found in Exiguobacterium sp. (strain ATCC BAA-1283 / AT1b).